A 518-amino-acid chain; its full sequence is GMP synthase [glutamine-hydrolyzing] (518 aa).

The 195-residue stretch at arginine 6–aspartate 200 folds into the Glutamine amidotransferase type-1 domain. Cysteine 84 functions as the Nucleophile in the catalytic mechanism. Catalysis depends on residues histidine 175 and glutamate 177. Positions tryptophan 201–arginine 393 constitute a GMPS ATP-PPase domain. Serine 228–serine 234 contributes to the ATP binding site.

Homodimer.

It catalyses the reaction XMP + L-glutamine + ATP + H2O = GMP + L-glutamate + AMP + diphosphate + 2 H(+). Its pathway is purine metabolism; GMP biosynthesis; GMP from XMP (L-Gln route): step 1/1. Catalyzes the synthesis of GMP from XMP. This is GMP synthase [glutamine-hydrolyzing] from Cereibacter sphaeroides (strain ATCC 17023 / DSM 158 / JCM 6121 / CCUG 31486 / LMG 2827 / NBRC 12203 / NCIMB 8253 / ATH 2.4.1.) (Rhodobacter sphaeroides).